The sequence spans 437 residues: Probable N-acetylmuramidase (437 aa).

Residues 1–57 form the signal peptide; the sequence is MPVSRVKVKNRHLKKKTKKPLAFYKPATKFAGAVLIAGTLTTTHELLLQQTSPMVQA. Disordered regions lie at residues 217 to 244, 290 to 320, and 367 to 392; these read SSAG…SSTT, ASST…SQTT, and AASN…NSNA. Residues 243-286 form the LysM 1 domain; it reads TTYTVKSGDTLWGISQRYGISVAQIQSANNLKSTIIYIGQKLVL. Positions 290 to 317 are enriched in low complexity; sequence ASSTNSGGSNNSASTTPTTSVTPAKPTS. Residues 319 to 362 enclose the LysM 2 domain; that stretch reads TTVKVKSGDTLWALSVKYKTSIAQLKSWNHLSSDTIYIGQNLIV. The LysM 3 domain occupies 393–436; it reads SIHKVVKGDTLWGLSQKSGSPIASIKAWNHLSSDTILIGQYLRI.

Belongs to the glycosyl hydrolase 73 family.

It is found in the secreted. The enzyme catalyses Hydrolysis of (1-&gt;4)-beta-linkages between N-acetylmuramic acid and N-acetyl-D-glucosamine residues in a peptidoglycan and between N-acetyl-D-glucosamine residues in chitodextrins.. In terms of biological role, hydrolyzes the cell wall of L.lactis and M.lysodeikticus. Required for cell separation during growth. The protein is Probable N-acetylmuramidase (acmA) of Lactococcus lactis subsp. cremoris (strain MG1363).